The sequence spans 749 residues: EF-hand domain-containing family member C2 (749 aa).

DM10 domains are found at residues 75–182, 226–368, and 431–538; these read DKQV…RKIG, HGKI…KSKY, and KSNI…EQNT. Positions 558–593 constitute an EF-hand domain; the sequence is GKSRELKQVFKAADSKHTNMVDYNTFRDILMSLTVG.

As to quaternary structure, microtubule inner protein component of sperm flagellar doublet microtubules. In terms of tissue distribution, expressed in airway epithelial cells.

Its subcellular location is the cytoplasm. It is found in the cytoskeleton. The protein localises to the cilium axoneme. The protein resides in the flagellum axoneme. In terms of biological role, microtubule inner protein (MIP) part of the dynein-decorated doublet microtubules (DMTs) in cilia axoneme, which is required for motile cilia beating. This is EF-hand domain-containing family member C2 from Homo sapiens (Human).